The chain runs to 512 residues: Cytochrome P450 26B1 (512 aa).

Cys-441 contacts heme.

This sequence belongs to the cytochrome P450 family. Requires heme as cofactor.

It is found in the endoplasmic reticulum membrane. The protein localises to the microsome membrane. The enzyme catalyses all-trans-retinoate + reduced [NADPH--hemoprotein reductase] + O2 = all-trans-4-hydroxyretinoate + oxidized [NADPH--hemoprotein reductase] + H2O + H(+). It carries out the reaction all-trans-retinoate + reduced [NADPH--hemoprotein reductase] + O2 = all-trans-18-hydroxyretinoate + oxidized [NADPH--hemoprotein reductase] + H2O + H(+). A cytochrome P450 monooxygenase involved in the metabolism of retinoates (RAs), the active metabolites of vitamin A, and critical signaling molecules in animals. RAs exist as at least four different isomers: all-trans-RA (atRA), 9-cis-RA, 13-cis-RA, and 9,13-dicis-RA, where atRA is considered to be the biologically active isomer, although 9-cis-RA and 13-cis-RA also have activity. Catalyzes the hydroxylation of atRA primarily at C-4 and C-18, thereby contributing to the regulation of atRA homeostasis and signaling. Hydroxylation of atRA limits its biological activity and initiates a degradative process leading to its eventual elimination. Involved in the convertion of atRA to all-trans-4-oxo-RA. Can oxidize all-trans-13,14-dihydroretinoate (DRA) to metabolites which could include all-trans-4-oxo-DRA, all-trans-4-hydroxy-DRA, all-trans-5,8-epoxy-DRA, and all-trans-18-hydroxy-DRA. Shows preference for the following substrates: atRA &gt; 9-cis-RA &gt; 13-cis-RA. Plays a central role in germ cell development: acts by degrading RAs in the developing testis, preventing STRA8 expression, thereby leading to delay of meiosis. Required for the maintenance of the undifferentiated state of male germ cells during embryonic development in Sertoli cells, inducing arrest in G0 phase of the cell cycle and preventing meiotic entry. Plays a role in skeletal development, both at the level of patterning and in the ossification of bone and the establishment of some synovial joints. Essential for postnatal survival. Its function is as follows. Also has a significant activity in oxidation of tazarotenic acid and may therefore metabolize that xenobiotic in vivo. The protein is Cytochrome P450 26B1 (CYP26B1) of Bos taurus (Bovine).